The sequence spans 352 residues: Schlafen-like protein 4 (352 aa).

Positions Phe-87–Gly-235 are SLFN-like fold. Residues Ile-326–Tyr-343 traverse the membrane as a helical segment.

This sequence belongs to the Schlafen family. As to quaternary structure, component of the PUCH (precursor of 21U RNA 5'-end cleavage holoenzyme) complex; consisting of tofu-1, tofu-2 and either slfl-3 or slfl-4.

The protein resides in the membrane. Functionally, component of the trimeric PUCH (precursor of 21U RNA 5'-end cleavage holoenzyme) complex, that acts as an endoribonuclease processing the 5'-end of precursor Piwi-interacting RNAs (piRNAs). The PUCH complex consists of tofu-1, tofu-2 and either slfl-3 or slfl-4, where tofu-2 exhibits endoribonuclease activity. PUCH-mediated processing strictly requires a 7-methyl-G cap (m7 G-cap) and an uracil at position three (U3). PUCH also exhibits a strict bias for piRNA precursors with an A or G at position 1. Mature piRNA production is enhanced by the interaction of PUCH with the PETISCO complex, which is stabilizing piRNA precursors and allows their processing by PUCH. The polypeptide is Schlafen-like protein 4 (Caenorhabditis elegans).